Consider the following 96-residue polypeptide: Large ribosomal subunit protein bL28 (96 aa).

Belongs to the bacterial ribosomal protein bL28 family.

The sequence is that of Large ribosomal subunit protein bL28 from Parvibaculum lavamentivorans (strain DS-1 / DSM 13023 / NCIMB 13966).